We begin with the raw amino-acid sequence, 350 residues long: Uroporphyrinogen decarboxylase (350 aa).

Residues 28–32 (RQAGR), F47, D78, Y155, S210, and H325 contribute to the substrate site.

This sequence belongs to the uroporphyrinogen decarboxylase family. In terms of assembly, homodimer.

Its subcellular location is the cytoplasm. It carries out the reaction uroporphyrinogen III + 4 H(+) = coproporphyrinogen III + 4 CO2. The protein operates within porphyrin-containing compound metabolism; protoporphyrin-IX biosynthesis; coproporphyrinogen-III from 5-aminolevulinate: step 4/4. In terms of biological role, catalyzes the decarboxylation of four acetate groups of uroporphyrinogen-III to yield coproporphyrinogen-III. This chain is Uroporphyrinogen decarboxylase, found in Nostoc sp. (strain PCC 7120 / SAG 25.82 / UTEX 2576).